We begin with the raw amino-acid sequence, 100 residues long: Small ribosomal subunit protein uS14c (100 aa).

This sequence belongs to the universal ribosomal protein uS14 family. As to quaternary structure, part of the 30S ribosomal subunit.

It is found in the plastid. Its subcellular location is the chloroplast. In terms of biological role, binds 16S rRNA, required for the assembly of 30S particles. The polypeptide is Small ribosomal subunit protein uS14c (Lobularia maritima (Sweet alyssum)).